The chain runs to 191 residues: Peptidyl-tRNA hydrolase (191 aa).

A tRNA-binding site is contributed by Y16. Residue H21 is the Proton acceptor of the active site. The tRNA site is built by F67, N69, and N115.

It belongs to the PTH family. As to quaternary structure, monomer.

The protein localises to the cytoplasm. It carries out the reaction an N-acyl-L-alpha-aminoacyl-tRNA + H2O = an N-acyl-L-amino acid + a tRNA + H(+). Hydrolyzes ribosome-free peptidyl-tRNAs (with 1 or more amino acids incorporated), which drop off the ribosome during protein synthesis, or as a result of ribosome stalling. Its function is as follows. Catalyzes the release of premature peptidyl moieties from peptidyl-tRNA molecules trapped in stalled 50S ribosomal subunits, and thus maintains levels of free tRNAs and 50S ribosomes. In Ruthia magnifica subsp. Calyptogena magnifica, this protein is Peptidyl-tRNA hydrolase.